Consider the following 303-residue polypeptide: Polyisoprenyl-teichoic acid--peptidoglycan teichoic acid transferase TagU (303 aa).

Over 1–6 (MSKGKK) the chain is Cytoplasmic. Residues 7 to 27 (IFAIIFGIILVLFLAVVGMGA) form a helical; Signal-anchor for type II membrane protein membrane-spanning segment. The Extracellular segment spans residues 28-303 (KLYWDVSKSM…QELKNQLNTK (276 aa)).

Belongs to the LytR/CpsA/Psr (LCP) family.

The protein localises to the cell membrane. Its pathway is cell wall biogenesis. Functionally, may catalyze the final step in cell wall teichoic acid biosynthesis, the transfer of the anionic cell wall polymers (APs) from their lipid-linked precursor to the cell wall peptidoglycan (PG). This chain is Polyisoprenyl-teichoic acid--peptidoglycan teichoic acid transferase TagU, found in Enterococcus faecalis (strain ATCC 700802 / V583).